We begin with the raw amino-acid sequence, 231 residues long: Flagellar L-ring protein (231 aa).

A signal peptide spans 1-18 (MNRLMIVSLLGIATALGG). Cys19 carries the N-palmitoyl cysteine lipid modification. Cys19 carries the S-diacylglycerol cysteine lipid modification. The disordered stretch occupies residues 118 to 141 (LSLSAEYGGSRDAKGDSQAGQSNS).

Belongs to the FlgH family. In terms of assembly, the basal body constitutes a major portion of the flagellar organelle and consists of four rings (L,P,S, and M) mounted on a central rod.

It is found in the cell outer membrane. Its subcellular location is the bacterial flagellum basal body. In terms of biological role, assembles around the rod to form the L-ring and probably protects the motor/basal body from shearing forces during rotation. The polypeptide is Flagellar L-ring protein (Pseudomonas aeruginosa (strain UCBPP-PA14)).